Consider the following 604-residue polypeptide: uncharacterized protein (604 aa).

An N-terminal signal peptide occupies residues 1–40 (MWLQQRIKVFPGLLSSSWARRVLAVSGFLVIIYWYIFSGS). Residues 41 to 563 (HYRSFWYSGK…EEHMAKQYRG (523 aa)) are Extracellular-facing. Asn-337 carries N-linked (GlcNAc...) asparagine glycosylation. A helical transmembrane segment spans residues 564–584 (LPFLFWFSVASLITLFHLFLF). At 585 to 604 (KLIYNEYCGPGAKPLFRSKV) the chain is on the cytoplasmic side.

It localises to the membrane. This is an uncharacterized protein from Xenopus laevis (African clawed frog).